We begin with the raw amino-acid sequence, 4857 residues long: Dual E2 ubiquitin-conjugating enzyme/E3 ubiquitin-protein ligase BIRC6 (4857 aa).

WD repeat units lie at residues 68 to 106 and 107 to 136; these read DGLH…QASA and LSAK…AVGC. The BIR repeat unit spans residues 268-377; sequence PELGVGPGRS…LSVTLATSPA (110 aa). The Zn(2+) site is built by Cys328, Cys331, His348, and Cys355. The WD 3 repeat unit spans residues 379–426; the sequence is FPCTDGTDRISCFGSGSCPHFLAAATKRGKICIWDVSKLMKVHLKFEI. 2 disordered regions span residues 465–498 and 579–618; these read DIPK…TSQK and ATSP…NSEL. Residues 472 to 482 are compositionally biased toward acidic residues; it reads DSDDLLEDSDS. Ser473, Ser480, Ser482, Ser581, and Ser590 each carry phosphoserine. 4 WD repeats span residues 501–720, 730–850, 851–927, and 928–966; these read MEVS…VQCL, NLCI…QHIK, DPQD…AKVE, and PPKK…FLQI. Positions 579–588 are enriched in polar residues; sequence ATSPISSNSH. Over residues 595 to 618 the composition is skewed to polar residues; sequence SRTQGESISEQGSTDNESCTNSEL. Disordered stretches follow at residues 984 to 1004 and 1053 to 1073; these read LSKG…PSSP and QQQR…AAQH. The span at 992-1004 shows a compositional bias: polar residues; sequence SEGSKPLSNPSSP. Residues 1056–1065 show a composition bias toward basic residues; sequence RRHPQHLHQQ. Phosphothreonine is present on Thr1710. 2 positions are modified to phosphoserine: Ser2222 and Ser2955. The segment at 2945–2973 is disordered; sequence SVTTNTTDSVSDEEKVSGGKDGNGSSTSV. Residues 3189-3193 form an HRRAR loop; important for DIABLO/SMAC and HTRA2 binding region; sequence HRRAR. One can recognise a Ubiquitin-like domain in the interval 3819–4068; that stretch reads DEKVTMFLQS…ESLLETCPIQ (250 aa). Residues 3923-3949 are disordered; the sequence is QSKRAVSATPPRPPSRRGRTIPDKIGS. Thr3931 carries the phosphothreonine modification. Ser4023 is modified (phosphoserine). Residues 4260–4283 form a disordered region; that stretch reads RVPNSSVNQTEPQVSSSHNPTSTE. The span at 4261-4283 shows a compositional bias: polar residues; that stretch reads VPNSSVNQTEPQVSSSHNPTSTE. The 168-residue stretch at 4573-4740 folds into the UBC core domain; the sequence is ARARRLAQEA…IRQATVKWAM (168 aa). Cys4666 acts as the Glycyl thioester intermediate in catalysis. A disordered region spans residues 4835 to 4857; sequence EETLMHDQVKPSSSKELPSDFQL. Residues 4844–4857 show a composition bias toward polar residues; sequence KPSSSKELPSDFQL.

Belongs to the BIRC6 family. Homodimer; antiparallel. Interacts with RNF41. Interacts with DIABLO/SMAC, likely with higher affinity to SMAC dimer than SMAC monomer; this interaction blocks the substrate-binding site and inhibits the caspase inhibition activity of BIRC6. Interacts with KIF23/MKLP1, USP8/UBPY, BIRC5/survivin, MAP2K1/MEK1, RAB8A/RAB8, RAB11A/RAB11, PLK1, EXOC3/SEC6 and EXOC4/SEC8. Post-translationally, ubiquitinated; mediated by RNF41 E3 ligase and leads to proteasomal degradation, impairing inhibition of apoptosis. Deubiquitinated by USP8/UBPY. Autoubiquitinated; mediated by E1 ubiquitin activating enzyme UBA6. Proteolytically cleaved. Acts as substrate for CASP3, CASP6, CASP7, CASP9 and HTRA2. Expressed in brain cancer cells.

It localises to the golgi apparatus. Its subcellular location is the trans-Golgi network membrane. The protein localises to the endosome. The protein resides in the cytoplasm. It is found in the cytoskeleton. It localises to the spindle pole. Its subcellular location is the microtubule organizing center. The protein localises to the centrosome. The protein resides in the midbody. It is found in the midbody ring. It catalyses the reaction S-ubiquitinyl-[E1 ubiquitin-activating enzyme]-L-cysteine + [acceptor protein]-L-lysine = [E1 ubiquitin-activating enzyme]-L-cysteine + N(6)-monoubiquitinyl-[acceptor protein]-L-lysine.. Its activity is regulated as follows. Inhibited by DIABLO/SMAC, which competes for the substrate-binding sites on BIRC6. BIRC6 inhibits caspases and protease by ubiquitination but BIRC6 itself is subjected to protease cleavage by CASP3, CASP6, CASP7, CASP9 and HTRA2 by protease cleavage. In terms of biological role, anti-apoptotic protein known as inhibitor of apoptosis (IAP) which can regulate cell death by controlling caspases and by acting as an E3 ubiquitin-protein ligase. Unlike most IAPs, does not contain a RING domain and it is not a RING-type E3 ligase. Instead acts as a dual E2/E3 enzyme that combines ubiquitin conjugating (E2) and ubiquitin ligase (E3) activities in a single polypeptide. Ubiquitination is mediated by a non-canonical E1 ubiquitin activating enzyme UBA6. Ubiquitinates CASP3, CASP7 and CASP9 and inhibits their caspase activity; also ubiquitinates their procaspases but to a weaker extent. Ubiquitinates pro-apoptotic factors DIABLO/SMAC and HTRA2. DIABLO/SMAC antagonizes the caspase inhibition activity of BIRC6 by competing for the same binding sites as the caspases. Ubiquitinates the autophagy protein MAP1LC3B; this activity is also inhibited by DIABLO/SMAC. Important regulator for the final stages of cytokinesis. Crucial for normal vesicle targeting to the site of abscission, but also for the integrity of the midbody and the midbody ring, and its striking ubiquitin modification. This chain is Dual E2 ubiquitin-conjugating enzyme/E3 ubiquitin-protein ligase BIRC6 (BIRC6), found in Homo sapiens (Human).